Here is a 98-residue protein sequence, read N- to C-terminus: Transcription elongation factor A protein-like 7 (98 aa).

Over residues methionine 1–proline 24 the composition is skewed to basic and acidic residues. The disordered stretch occupies residues methionine 1–glutamine 31. Residues glycine 59 to asparagine 89 adopt a coiled-coil conformation.

The protein belongs to the TFS-II family. TFA subfamily.

The protein localises to the nucleus. Functionally, plays a role in the negative regulation of NF-kappa-B signaling at the basal level by modulating transcriptional activity of NF-kappa-B on its target gene promoters. Associates with cyclin D1 promoter containing Myc E-box sequence and transcriptionally represses cyclin D1 expression. Regulates telomerase reverse transcriptase expression and telomerase activity in both ALT (alternative lengthening of telomeres)and telomerase-positive cell lines. In Rattus norvegicus (Rat), this protein is Transcription elongation factor A protein-like 7 (Tceal7).